The sequence spans 382 residues: ATP phosphoribosyltransferase regulatory subunit (382 aa).

It belongs to the class-II aminoacyl-tRNA synthetase family. HisZ subfamily. As to quaternary structure, heteromultimer composed of HisG and HisZ subunits.

Its subcellular location is the cytoplasm. Its pathway is amino-acid biosynthesis; L-histidine biosynthesis; L-histidine from 5-phospho-alpha-D-ribose 1-diphosphate: step 1/9. In terms of biological role, required for the first step of histidine biosynthesis. May allow the feedback regulation of ATP phosphoribosyltransferase activity by histidine. This Burkholderia ambifaria (strain MC40-6) protein is ATP phosphoribosyltransferase regulatory subunit.